A 620-amino-acid chain; its full sequence is Glutathione-regulated potassium-efflux system protein KefC (620 aa).

12 helical membrane passes run 4-24 (HTLI…PIAV), 26-46 (LGLG…PWGL), 54-74 (SILH…GLEL), 90-110 (GALQ…LLGL), 114-134 (VAEL…MQAM), 149-169 (FAVL…IPLL), 178-198 (MGAF…VVLL), 218-238 (VFSA…EEVG), 270-290 (GLLL…GTLI), 294-314 (LRIV…LWLI), 327-347 (WFAV…GAAQ), and 359-379 (SLTL…VILN). In terms of domain architecture, RCK N-terminal spans 399–518 (QPRVIIAGFG…AGVEKPERET (120 aa)). Residues 597 to 620 (GWQGTEEGKHTGNMADEPETKPSS) form a disordered region.

The protein belongs to the monovalent cation:proton antiporter 2 (CPA2) transporter (TC 2.A.37) family. KefC subfamily. As to quaternary structure, homodimer. Interacts with the regulatory subunit KefF.

It localises to the cell inner membrane. In terms of biological role, pore-forming subunit of a potassium efflux system that confers protection against electrophiles. Catalyzes K(+)/H(+) antiport. The sequence is that of Glutathione-regulated potassium-efflux system protein KefC from Escherichia coli O17:K52:H18 (strain UMN026 / ExPEC).